The chain runs to 312 residues: Apolipoprotein E (312 aa).

The N-terminal stretch at 1-18 (MKALWALLLVPLLTGCLA) is a signal peptide. A run of 8 repeats spans residues 72 to 93 (VLME…EQLG), 94 to 115 (PVAE…ARLG), 116 to 137 (ADME…TMLG), 138 to 159 (QSTE…KRLM), 160 to 181 (RDAD…EGAE), 182 to 203 (RGVS…QRTA), 204 to 225 (NLGA…DRIR), and 226 to 247 (GRLE…EQME). An 8 X 22 AA approximate tandem repeats region spans residues 72–247 (VLMEDTMTEV…RLEEVREQME (176 aa)). Met-135 is subject to Methionine sulfoxide. Ser-139 is subject to Phosphoserine. An LDL and other lipoprotein receptors binding region spans residues 150–160 (HLRKMRKRLMR). The segment at 150–160 (HLRKMRKRLMR) is LDL receptor binding. 154–157 (MRKR) lines the heparin pocket. The lipid-binding and lipoprotein association stretch occupies residues 202-282 (TANLGAGAAQ…GWFEPLVEDM (81 aa)). A heparin-binding site is contributed by 221–228 (SDRIRGRL). The segment at 258–312 (QQIRLQAEIFQARIKGWFEPLVEDMQRQWANLMEKIQASVATNSIASTTVPLENQ) is homooligomerization. A specificity for association with VLDL region spans residues 270 to 282 (RIKGWFEPLVEDM).

This sequence belongs to the apolipoprotein A1/A4/E family. As to quaternary structure, homotetramer. May interact with ABCA1; functionally associated with ABCA1 in the biogenesis of HDLs. May interact with APP/A4 amyloid-beta peptide; the interaction is extremely stable in vitro but its physiological significance is unclear. May interact with MAPT. May interact with MAP2. In the cerebrospinal fluid, interacts with secreted SORL1. Interacts with PMEL; this allows the loading of PMEL luminal fragment on ILVs to induce fibril nucleation. In terms of processing, APOE exists as multiple glycosylated and sialylated glycoforms within cells and in plasma. The extent of glycosylation and sialylation are tissue and context specific. Post-translationally, glycated in plasma VLDL. Phosphorylated by FAM20C in the extracellular medium.

The protein localises to the secreted. It localises to the extracellular space. Its subcellular location is the extracellular matrix. It is found in the extracellular vesicle. The protein resides in the endosome. The protein localises to the multivesicular body. In terms of biological role, APOE is an apolipoprotein, a protein associating with lipid particles, that mainly functions in lipoprotein-mediated lipid transport between organs via the plasma and interstitial fluids. APOE is a core component of plasma lipoproteins and is involved in their production, conversion and clearance. Apolipoproteins are amphipathic molecules that interact both with lipids of the lipoprotein particle core and the aqueous environment of the plasma. As such, APOE associates with chylomicrons, chylomicron remnants, very low density lipoproteins (VLDL) and intermediate density lipoproteins (IDL) but shows a preferential binding to high-density lipoproteins (HDL). It also binds a wide range of cellular receptors including the LDL receptor/LDLR and the very low-density lipoprotein receptor/VLDLR that mediate the cellular uptake of the APOE-containing lipoprotein particles. Finally, APOE also has a heparin-binding activity and binds heparan-sulfate proteoglycans on the surface of cells, a property that supports the capture and the receptor-mediated uptake of APOE-containing lipoproteins by cells. This Rattus norvegicus (Rat) protein is Apolipoprotein E (Apoe).